The chain runs to 167 residues: Ribosome maturation factor RimM (167 aa).

The PRC barrel domain occupies 92-165; that stretch reads EDTYYIADII…RITIDPIEGM (74 aa).

This sequence belongs to the RimM family. In terms of assembly, binds ribosomal protein uS19.

The protein localises to the cytoplasm. Functionally, an accessory protein needed during the final step in the assembly of 30S ribosomal subunit, possibly for assembly of the head region. Essential for efficient processing of 16S rRNA. May be needed both before and after RbfA during the maturation of 16S rRNA. It has affinity for free ribosomal 30S subunits but not for 70S ribosomes. This Alkaliphilus oremlandii (strain OhILAs) (Clostridium oremlandii (strain OhILAs)) protein is Ribosome maturation factor RimM.